A 1338-amino-acid chain; its full sequence is Thioester-containing protein 1 allele S3 (1338 aa).

An N-terminal signal peptide occupies residues 1–21 (MWQFIRSRILTVIIFIGAAHG). Residues asparagine 68, asparagine 199, asparagine 242, asparagine 312, and asparagine 481 are each glycosylated (N-linked (GlcNAc...) asparagine). Residues 580–609 (ENEFDIFHSLGLFARTLDDILFDSANEKTG) form a may contain the cleavage site region. 4 N-linked (GlcNAc...) asparagine glycosylation sites follow: asparagine 637, asparagine 728, asparagine 813, and asparagine 828. Residues 859-862 (CGEQ) constitute a cross-link (isoglutamyl cysteine thioester (Cys-Gln)). Intrachain disulfides connect cysteine 1217–cysteine 1283, cysteine 1326–cysteine 1338, and cysteine 1329–cysteine 1334.

Heterodimer of a TEP1-N chain and an TEP1-C chain non-covalently linked. Forms a complex composed of TEP1-N and TEP1-C heterodimer, LRIM1 and APL1C; the interaction stabilizes TEP1-N and TEP1-C heterodimer, prevents its binding to tissues while circulating in the hemolymph and protects the thioester bond from hydrolysis. Mature TEP1 and to a lesser extent full-length TEP1 interact with SPCLIP1; the interaction is induced by microbial infection. In the hemolymph, the full-length protein is cleaved by an unknow protease into a 75kDa N-terminal (TEP1-N) chain and an 80kDa C-terminal (TEP1-C) chain which remain non-covalently linked. The TEP1-C chain contains the thioester bond which covalently binds to the pathogen surface. Cleavage is induced by bacterial infection or aseptic wound injury. During embryonic and pupal development, the cleaved form is the predominant form. Post-translationally, N-glycosylated.

The protein localises to the secreted. Functionally, plays an essential role in the innate immune response against bacteria, fungi and protozoa infection. After proteolytic cleavage, the protein C-terminus binds covalently through a thioester bond to the pathogen surface resulting in pathogen clearance either by melanization or lysis. Initiate the recruitment and activation of a cascade of proteases, mostly of CLIP-domain serine proteases, which leads to the proteolytic cleavage of the prophenoloxidase (PPO) into active phenoloxidase (PO), the rate-limiting enzyme in melanin biosynthesis. In response to parasite P.berghei-mediated infection, binds to and mediates killing of ookinetes, as they egress from midgut epithelial cells into the basal labyrinth, by both lysis and melanization. During bacterial infection, binds to both Gram-positive and Gram-negative bacteria but only promotes phagocytosis of Gram-negative bacteria. Promotes the accumulation of SPCLIP1 onto the surface of P.berghei ookinetes and bacterium E.coli which leads to the melanization of the pathogen. Recruits CLIPA2 to bacteria surface. In response to bacterial infection, required for periostial hemocyte aggregation, but not for the aggregation of sessile hemocytes in non-periostial regions. During the late stage of fungus B.bassiana-mediated infection, required for the initiation of hyphae melanization by binding to the surface of hyphae and recruiting prophenoloxidase PPO to them. Plays a role in male fertility by binding to defective sperm cells and promoting their removal during spermatogenesis. In terms of biological role, binds to and mediates killing of parasite P.bergei ookinetes by lysis. Binds covalently through a thioester bond to the pathogen surface resulting in pathogen clearance. The sequence is that of Thioester-containing protein 1 allele S3 from Anopheles gambiae (African malaria mosquito).